Reading from the N-terminus, the 452-residue chain is LIM/homeobox protein lim-7 (452 aa).

2 consecutive LIM zinc-binding domains span residues 54 to 116 and 117 to 179; these read AVCA…LFTT and RCSR…LDNP. The disordered stretch occupies residues 184–268; the sequence is SVPDYSKLNN…KKKDKQATRV (85 aa). 2 stretches are compositionally biased toward low complexity: residues 192-205 and 217-227; these read NNNN…SSSN and TLTSLDNNTSS. The homeobox DNA-binding region spans 265–324; that stretch reads ATRVRTVLNENQLKILRDCYSINSRPDATLKERLVEMTGLSARVIRVWFQNKRCKDKKRQ. An LIM interaction domain (LID) region spans residues 347-376; that stretch reads GIGPLMVQPATPHIDNTLGGPIDIQHFAQW.

As to quaternary structure, interacts (via LID domain) with ceh-14 (via LIM zinc-binding domains 1 and 2). Expressed in gonadal sheath cells, URA motoneurons, and 10 additional cells near the isthmus and terminal bulb of the pharynx. Expressed in the ALA and BDU cells.

The protein resides in the nucleus. Probable DNA-binding transcriptional activator. This is LIM/homeobox protein lim-7 from Caenorhabditis elegans.